The chain runs to 466 residues: MERSLSFEPYLLTPLDHIIKDFYVSSFISFPLHDPTTAVSALKDGVERLTRALPFLSGARVPSSKLPGKRNVMEIHPSPESLEWIPMLQIKHYRDTTLVATCSPGPTGCSDLDDSWCALPIIIPADRPSPVARFRASVFPDGILLCMTLNHAVFDGSGLGTVLKMLATCCCANSAMDHPVSLPTTYAKEASSRQIILESAAPSSGSDSEAYDRIFKSNDIIPGLDKGITSRRFSFPASKIRALKDACNAAKPTDQDPAISRNDVLTALLTICMTRARQTEQTKNLTTQLAVPVNLRRKFHPSLPDSYLGNTIIPLVVDIDPPTVPSSRCGTSPMHAHLNELTNLSLRIRKELKLLDEKDYTGGLVSYLREQSDWGATSMKFTDITVSSLRHLDINGLDFGPEIGRANSFDVQSGMYPGICDIMPTCGRDRVEDINDVPWDVCVTLEDSAWSAFMEDDLVLWALEKI.

It belongs to the fumigaclavine B O-acetyltransferase family.

It functions in the pathway alkaloid biosynthesis. Communesin N16 acyltransferase; part of the gene cluster that mediates the biosynthesis of communesins, a prominent class of indole alkaloids with great potential as pharmaceuticals. Communesins are biosynthesized by the coupling of tryptamine and aurantioclavine, two building blocks derived from L-tryptophan. The L-tryptophan decarboxylase cnsB converts L-tryptophan to tryptamine, whereas the tryptophan dimethylallyltransferase cnsF converts L-tryptophan to 4-dimethylallyl tryptophan which is further transformed to aurantioclavine by the aurantioclavine synthase cnsA, probably aided by the catalase cnsD. The cytochrome P450 monooxygenase cnsC catalyzes the heterodimeric coupling between the two different indole moieties, tryptamine and aurantioclavine, to construct vicinal quaternary stereocenters and yield the heptacyclic communesin scaffold. The O-methyltransferase cnsE then methylates the communesin scaffold to produce communesin K, the simplest characterized communesin that contains the heptacyclic core. The dioxygenase cnsJ converts communesin K into communesin I. Acylation to introduce the hexadienyl group at position N16 of communesin I by the acyltransferase cnsK leads to the production of communesin B. The hexadienyl group is produced by the highly reducing polyketide synthase cnsI, before being hydrolytically removed from cnsI by the serine hydrolase cnsH, converted into hexadienyl-CoA by the CoA ligase cnsG, and then transferred to communesin I by cnsK. Surprisingly, cnsK may also be a promiscuous acyltransferase that can tolerate a range of acyl groups, including acetyl-, propionyl-, and butyryl-CoA, which lead to communesins A, G and H respectively. The roles of the alpha-ketoglutarate-dependent dioxygenases cnsM and cnsP have still to be determined. The polypeptide is Communesin N16 acyltransferase cnsK (Penicillium expansum (Blue mold rot fungus)).